A 245-amino-acid chain; its full sequence is Carboxy-S-adenosyl-L-methionine synthase (245 aa).

Residues Tyr42, 67 to 69 (GCS), 92 to 93 (DN), 120 to 121 (DI), Asn135, and Arg202 contribute to the S-adenosyl-L-methionine site.

This sequence belongs to the class I-like SAM-binding methyltransferase superfamily. Cx-SAM synthase family. In terms of assembly, homodimer.

The catalysed reaction is prephenate + S-adenosyl-L-methionine = carboxy-S-adenosyl-L-methionine + 3-phenylpyruvate + H2O. Catalyzes the conversion of S-adenosyl-L-methionine (SAM) to carboxy-S-adenosyl-L-methionine (Cx-SAM). In Vibrio parahaemolyticus serotype O3:K6 (strain RIMD 2210633), this protein is Carboxy-S-adenosyl-L-methionine synthase.